Here is a 67-residue protein sequence, read N- to C-terminus: Phycobilisome 7.8 kDa linker polypeptide, allophycocyanin-associated, core (67 aa).

Residues 1-56 (GRLFKITACVPSQTRIRTQRELQNTYFTKLVPYENWFREQQRIQKMGGKIVKVELA) enclose the CpcD-like domain.

It belongs to the phycobilisome linker protein family.

It localises to the cellular thylakoid membrane. Rod linker protein, associated with allophycocyanin. Linker polypeptides determine the state of aggregation and the location of the disk-shaped phycobiliprotein units within the phycobilisome and modulate their spectroscopic properties in order to mediate a directed and optimal energy transfer. This is Phycobilisome 7.8 kDa linker polypeptide, allophycocyanin-associated, core (apcC) from Mastigocladus laminosus (Fischerella sp.).